Reading from the N-terminus, the 152-residue chain is MTPNGKPAIRLSLRAGERIFINGAVLRADRKVSLELLNDATFLLENHVLQPEDTTTPLRQLYFAAQMMLIEPAMREQAHSTFAQMLKGMFSTFKDAEILNALKLVDELVHNGRIFEALKTIRAQYPREAELMGLESPVLPVAATRKSAEANP.

This sequence belongs to the FlbT family.

Functionally, has a post-transcriptional repressor function in flagellum biogenesis. Associates with the 5'-UTR of fljK mRNA and promotes its degradation. This Brucella anthropi (strain ATCC 49188 / DSM 6882 / CCUG 24695 / JCM 21032 / LMG 3331 / NBRC 15819 / NCTC 12168 / Alc 37) (Ochrobactrum anthropi) protein is Probable flagellum biosynthesis repressor protein FlbT.